Here is a 375-residue protein sequence, read N- to C-terminus: Ornithine transcarbamylase, chloroplastic (375 aa).

The N-terminal 53 residues, 1–53 (MAAAMASHVSTARSPALSFSSSSSSFFPGTTLRRFSAVSLPSPALPRLRVSCQ), are a transit peptide targeting the chloroplast. N-acetylalanine is present on Ala-54. Residues 123–126 (SMRT), Arg-174, His-201, and Gln-204 each bind carbamoyl phosphate. Residues Asn-232, Asp-293, Ser-297, and Met-298 each coordinate L-ornithine. The Proton acceptor role is filled by Cys-333. Residues 333–334 (CL) and Arg-361 contribute to the carbamoyl phosphate site.

This sequence belongs to the aspartate/ornithine carbamoyltransferase superfamily. OTCase family.

Its subcellular location is the plastid. It is found in the chloroplast. The catalysed reaction is carbamoyl phosphate + L-ornithine = L-citrulline + phosphate + H(+). This chain is Ornithine transcarbamylase, chloroplastic (OTC), found in Arabidopsis thaliana (Mouse-ear cress).